The primary structure comprises 518 residues: Bifunctional purine biosynthesis protein PurH (518 aa).

The MGS-like domain maps to 1–144; the sequence is MSKRALISVS…KNHAAVTVVC (144 aa).

This sequence belongs to the PurH family.

The catalysed reaction is (6R)-10-formyltetrahydrofolate + 5-amino-1-(5-phospho-beta-D-ribosyl)imidazole-4-carboxamide = 5-formamido-1-(5-phospho-D-ribosyl)imidazole-4-carboxamide + (6S)-5,6,7,8-tetrahydrofolate. It catalyses the reaction IMP + H2O = 5-formamido-1-(5-phospho-D-ribosyl)imidazole-4-carboxamide. It participates in purine metabolism; IMP biosynthesis via de novo pathway; 5-formamido-1-(5-phospho-D-ribosyl)imidazole-4-carboxamide from 5-amino-1-(5-phospho-D-ribosyl)imidazole-4-carboxamide (10-formyl THF route): step 1/1. It functions in the pathway purine metabolism; IMP biosynthesis via de novo pathway; IMP from 5-formamido-1-(5-phospho-D-ribosyl)imidazole-4-carboxamide: step 1/1. The chain is Bifunctional purine biosynthesis protein PurH from Lactococcus lactis subsp. cremoris (strain SK11).